Here is a 562-residue protein sequence, read N- to C-terminus: Isochorismate synthase 2, chloroplastic (562 aa).

Residues 1 to 55 (MASLQCSFHFLGTNPKKYNPSSIFQSYSRTSFTKLSSRVSRQRFLRCTLSMNGCE) constitute a chloroplast transit peptide.

This sequence belongs to the isochorismate synthase family. Mg(2+) serves as cofactor.

Its subcellular location is the plastid. The protein localises to the chloroplast. The catalysed reaction is chorismate = isochorismate. It participates in siderophore biosynthesis; salicylate biosynthesis. Functionally, isochorismate synthase involved in the synthesis of salicylic acid (SA) required for both local and systemic acquired resistance (LAR and SAR) while SA synthesized through the phenylalanine ammonium lyase (PAL) pathway seems to potentiate plant cell death. Also involved in phylloquinone (vitamin K1) synthesis. Has no isochorismate pyruvate lyase (IPL) activity. The protein is Isochorismate synthase 2, chloroplastic (ICS2) of Arabidopsis thaliana (Mouse-ear cress).